The sequence spans 139 residues: Acidic phospholipase A2 S1E6-c (139 aa).

The first 16 residues, 1–16 (MRTLWILAVLLVGVEG), serve as a signal peptide directing secretion. Intrachain disulfides connect Cys42-Cys132, Cys44-Cys60, Cys59-Cys111, Cys65-Cys139, Cys66-Cys104, Cys73-Cys97, and Cys91-Cys102. Ca(2+) is bound by residues Tyr43, Gly45, and Gly47. Residue His63 is part of the active site. Asp64 serves as a coordination point for Ca(2+). Asp105 is an active-site residue.

The protein belongs to the phospholipase A2 family. Group II subfamily. D49 sub-subfamily. As to quaternary structure, homodimer. Ca(2+) is required as a cofactor. Expressed by the venom gland.

It localises to the secreted. It catalyses the reaction a 1,2-diacyl-sn-glycero-3-phosphocholine + H2O = a 1-acyl-sn-glycero-3-phosphocholine + a fatty acid + H(+). Its function is as follows. Snake venom phospholipase A2 (PLA2) that inhibits ADP-induced platelet aggregation. PLA2 catalyzes the calcium-dependent hydrolysis of the 2-acyl groups in 3-sn-phosphoglycerides. The sequence is that of Acidic phospholipase A2 S1E6-c from Calloselasma rhodostoma (Malayan pit viper).